The primary structure comprises 601 residues: MAATMVKHEILNYSEDEEENYSDEGDWGDWKADDNGIEGGEEEEEDDGDDSESDFLCLFCDSHFVSCDLLFEHCRLSHGFDFHGVRKELKLDFYSSFKLINYIRSQVAENMCFSWKIEADDYKDVKFPWDEEKYLKPFWQEDSLLYSFADDEEDEEVTFDREEVMEELQKLGDLSIDVEALGESSMSNSDKCNINGSKDVTSLSNCNGLKQSSADDLIVNGKDAEPKVCDGRLVNRNIRKVNENYFGSYSSFGIHREMLSDKVRTEAYRDALLKNPTLLNGSVVMDVGCGTGILSLFAAKAGASRVVAVEASEKMAKVATKIAKDNKVFNDNEHNGVLEVAHSMVEELDKSIQIQPHSVDVLVSEWMGYCLLYESMLSSVLYARDRWLKPGGAILPDTATMFVAGFGKGATSLPFWEDVYGFDMSSIGKEIHDDTTRLPIVDVIAERDLVTQPTLLQTFDLATMKPDEVDFTATATLEPTESEAKTRLCHGVVLWFDTGFTSRFCKENPTVLSTSPYTPPTHWAQTILTFQEPISVAPASVLSGNDRREAIGTEECPASSIHLRVSVARAHEHRSIDISLEATGLSSKGQKRHWPVQIFNL.

A compositionally biased stretch (basic and acidic residues) spans Met-1–Ile-10. The interval Met-1 to Asp-50 is disordered. Acidic residues-rich tracts occupy residues Ser-14–Trp-27 and Asn-35–Asp-50. The C2H2-type zinc-finger motif lies at Cys-57–His-78. Positions Asn-242 to Glu-554 constitute an SAM-dependent MTase PRMT-type domain. Residues Arg-264, Gly-288, Glu-310, Ser-312, Val-345, and Glu-346 each coordinate S-adenosyl-L-homocysteine. Catalysis depends on residues Glu-365 and Glu-374.

It belongs to the class I-like SAM-binding methyltransferase superfamily. Protein arginine N-methyltransferase family.

Its subcellular location is the cytoplasm. The protein localises to the cytosol. It catalyses the reaction L-arginyl-[protein] + S-adenosyl-L-methionine = N(omega)-methyl-L-arginyl-[protein] + S-adenosyl-L-homocysteine + H(+). The catalysed reaction is L-arginyl-[protein] + 2 S-adenosyl-L-methionine = N(omega),N(omega)-dimethyl-L-arginyl-[protein] + 2 S-adenosyl-L-homocysteine + 2 H(+). In terms of biological role, protein-arginine N-methyltransferase that catalyzes both the monomethylation and asymmetric dimethylation of the guanidino nitrogens of arginine residues in target proteins, and therefore falls into the group of type I methyltransferases. This is Probable protein arginine N-methyltransferase 3 (PRMT3) from Arabidopsis thaliana (Mouse-ear cress).